A 71-amino-acid polypeptide reads, in one-letter code: MPAVKVKENEPFDVALRRFKRSCEKAGVLSEVRRREHYEKPTAVRKRKAAAAVKRHLKKLQREQRKFERLY.

Belongs to the bacterial ribosomal protein bS21 family.

The polypeptide is Small ribosomal subunit protein bS21 (Marinobacter nauticus (strain ATCC 700491 / DSM 11845 / VT8) (Marinobacter aquaeolei)).